Consider the following 184-residue polypeptide: Protein GrpE (184 aa).

The disordered stretch occupies residues 1–26 (MTAPQEPVDSTPESGENAATPGLEDD).

The protein belongs to the GrpE family. As to quaternary structure, homodimer.

It is found in the cytoplasm. In terms of biological role, participates actively in the response to hyperosmotic and heat shock by preventing the aggregation of stress-denatured proteins, in association with DnaK and GrpE. It is the nucleotide exchange factor for DnaK and may function as a thermosensor. Unfolded proteins bind initially to DnaJ; upon interaction with the DnaJ-bound protein, DnaK hydrolyzes its bound ATP, resulting in the formation of a stable complex. GrpE releases ADP from DnaK; ATP binding to DnaK triggers the release of the substrate protein, thus completing the reaction cycle. Several rounds of ATP-dependent interactions between DnaJ, DnaK and GrpE are required for fully efficient folding. The chain is Protein GrpE from Bordetella bronchiseptica (strain ATCC BAA-588 / NCTC 13252 / RB50) (Alcaligenes bronchisepticus).